Consider the following 426-residue polypeptide: Serine protease HTRA2, mitochondrial (426 aa).

The span at 31 to 58 (SSTCNSTNTDNGSHNTNYNSSNNNNNNN) shows a compositional bias: low complexity. Residues 31-59 (SSTCNSTNTDNGSHNTNYNSSNNNNNNND) form a disordered region. The helical transmembrane segment at 71–87 (FLVPFSLGALASSVVAG) threads the bilayer. An IAP-binding motif is present at residues 79-82 (ALAS). The segment at 143–306 (SNGSGFVIEQ…IPIDYVKLFL (164 aa)) is serine protease. Catalysis depends on charge relay system residues H161, D193, and S270. The PDZ domain maps to 329-414 (MGITMLTLTP…DLDMVILRGV (86 aa)).

It belongs to the peptidase S1C family. In terms of assembly, interacts with th/DIAP1 (via BIR 2 domain).

The protein resides in the mitochondrion intermembrane space. Its subcellular location is the mitochondrion membrane. The enzyme catalyses Cleavage of non-polar aliphatic amino-acids at the P1 position, with a preference for Val, Ile and Met. At the P2 and P3 positions, Arg is selected most strongly with a secondary preference for other hydrophilic residues.. Functionally, serine protease that shows proteolytic activity against a non-specific substrate beta-casein. Promotes or induces cell death either by direct binding to and inhibition of BIRC proteins (also called inhibitor of apoptosis proteins, IAPs), leading to an increase in caspase activity, or by a BIRC inhibition-independent, caspase-independent and serine protease activity-dependent mechanism. Can antagonize antiapoptotic activity of th/Diap1 by directly inducing the degradation of th/Diap1. This chain is Serine protease HTRA2, mitochondrial, found in Drosophila grimshawi (Hawaiian fruit fly).